Here is a 474-residue protein sequence, read N- to C-terminus: tRNA modification GTPase MnmE (474 aa).

3 residues coordinate (6S)-5-formyl-5,6,7,8-tetrahydrofolate: R25, E82, and K123. Residues G219 to M386 form the TrmE-type G domain. N229 contributes to the K(+) binding site. GTP is bound by residues N229–S234, S248–T254, and D273–G276. S233 contacts Mg(2+). K(+) contacts are provided by S248, I250, and T253. T254 contributes to the Mg(2+) binding site. K474 is a (6S)-5-formyl-5,6,7,8-tetrahydrofolate binding site.

The protein belongs to the TRAFAC class TrmE-Era-EngA-EngB-Septin-like GTPase superfamily. TrmE GTPase family. In terms of assembly, homodimer. Heterotetramer of two MnmE and two MnmG subunits. It depends on K(+) as a cofactor.

It is found in the cytoplasm. Its function is as follows. Exhibits a very high intrinsic GTPase hydrolysis rate. Involved in the addition of a carboxymethylaminomethyl (cmnm) group at the wobble position (U34) of certain tRNAs, forming tRNA-cmnm(5)s(2)U34. The protein is tRNA modification GTPase MnmE of Blochmanniella floridana.